Consider the following 160-residue polypeptide: Endoribonuclease YbeY (160 aa).

Residues His-118, His-122, and His-128 each coordinate Zn(2+).

It belongs to the endoribonuclease YbeY family. Zn(2+) serves as cofactor.

It localises to the cytoplasm. Single strand-specific metallo-endoribonuclease involved in late-stage 70S ribosome quality control and in maturation of the 3' terminus of the 16S rRNA. The protein is Endoribonuclease YbeY of Treponema pallidum (strain Nichols).